A 176-amino-acid polypeptide reads, in one-letter code: RNA pyrophosphohydrolase (176 aa).

Residues G6–K149 enclose the Nudix hydrolase domain. Residues G38 to G59 carry the Nudix box motif.

Belongs to the Nudix hydrolase family. RppH subfamily. A divalent metal cation serves as cofactor.

Accelerates the degradation of transcripts by removing pyrophosphate from the 5'-end of triphosphorylated RNA, leading to a more labile monophosphorylated state that can stimulate subsequent ribonuclease cleavage. The sequence is that of RNA pyrophosphohydrolase from Klebsiella pneumoniae (strain 342).